The primary structure comprises 702 residues: Ribosomal RNA large subunit methyltransferase K/L (702 aa).

A THUMP domain is found at 43–154 (LIYQSLMWSR…KETASIALDL (112 aa)).

It belongs to the methyltransferase superfamily. RlmKL family.

The protein localises to the cytoplasm. It catalyses the reaction guanosine(2445) in 23S rRNA + S-adenosyl-L-methionine = N(2)-methylguanosine(2445) in 23S rRNA + S-adenosyl-L-homocysteine + H(+). The catalysed reaction is guanosine(2069) in 23S rRNA + S-adenosyl-L-methionine = N(2)-methylguanosine(2069) in 23S rRNA + S-adenosyl-L-homocysteine + H(+). Functionally, specifically methylates the guanine in position 2445 (m2G2445) and the guanine in position 2069 (m7G2069) of 23S rRNA. The polypeptide is Ribosomal RNA large subunit methyltransferase K/L (Salmonella gallinarum (strain 287/91 / NCTC 13346)).